The chain runs to 154 residues: Interleukin-2 (154 aa).

Residues 1 to 20 (MYKLQLLSCIALTLALVANS) form the signal peptide. Thr23 carries O-linked (GalNAc...) threonine glycosylation. An intrachain disulfide couples Cys78 to Cys126.

It belongs to the IL-2 family.

The protein resides in the secreted. Functionally, cytokine produced by activated CD4-positive helper T-cells and to a lesser extend activated CD8-positive T-cells and natural killer (NK) cells that plays pivotal roles in the immune response and tolerance. Binds to a receptor complex composed of either the high-affinity trimeric IL-2R (IL2RA/CD25, IL2RB/CD122 and IL2RG/CD132) or the low-affinity dimeric IL-2R (IL2RB and IL2RG). Interaction with the receptor leads to oligomerization and conformation changes in the IL-2R subunits resulting in downstream signaling starting with phosphorylation of JAK1 and JAK3. In turn, JAK1 and JAK3 phosphorylate the receptor to form a docking site leading to the phosphorylation of several substrates including STAT5. This process leads to activation of several pathways including STAT, phosphoinositide-3-kinase/PI3K and mitogen-activated protein kinase/MAPK pathways. Functions as a T-cell growth factor and can increase NK-cell cytolytic activity as well. Promotes strong proliferation of activated B-cells and subsequently immunoglobulin production. Plays a pivotal role in regulating the adaptive immune system by controlling the survival and proliferation of regulatory T-cells, which are required for the maintenance of immune tolerance. Moreover, participates in the differentiation and homeostasis of effector T-cell subsets, including Th1, Th2, Th17 as well as memory CD8-positive T-cells. The chain is Interleukin-2 (IL2) from Lama glama (Llama).